A 91-amino-acid chain; its full sequence is Cell division protein ZapA (91 aa).

The stretch at 58 to 91 (LTAVNIASEYLKLKEEYNRLREQLKKEKDGERDD) forms a coiled coil.

The protein belongs to the ZapA family. Type 2 subfamily. In terms of assembly, homodimer. Interacts with FtsZ.

The protein resides in the cytoplasm. Its function is as follows. Activator of cell division through the inhibition of FtsZ GTPase activity, therefore promoting FtsZ assembly into bundles of protofilaments necessary for the formation of the division Z ring. It is recruited early at mid-cell but it is not essential for cell division. This Geobacillus kaustophilus (strain HTA426) protein is Cell division protein ZapA.